Here is a 632-residue protein sequence, read N- to C-terminus: Extracellular metalloproteinase 2 (632 aa).

The signal sequence occupies residues 1-19 (MHGLLLAGLAAALPLGVAG). Residues 20-244 (LPARQQSGLS…VHNVVDYVAS (225 aa)) constitute a propeptide that is removed on maturation. N-linked (GlcNAc...) asparagine glycosylation occurs at Asn270. Residue His429 coordinates Zn(2+). Glu430 is a catalytic residue. His433 is a Zn(2+) binding site.

The protein belongs to the peptidase M36 family. Requires Zn(2+) as cofactor.

It localises to the secreted. In terms of biological role, secreted metalloproteinase probably acting as a virulence factor. The sequence is that of Extracellular metalloproteinase 2 (MEP2) from Trichophyton tonsurans (Scalp ringworm fungus).